The sequence spans 62 residues: MENIKASTEQLCAEANIQRKKVSEVSKELLDFCEKNKTNDMLVSGPTDQHNPFQEKKSCSVL.

The tract at residues 40-62 (DMLVSGPTDQHNPFQEKKSCSVL) is disordered. Basic and acidic residues predominate over residues 53–62 (FQEKKSCSVL). The residue at position 59 (Cys59) is a Cysteine methyl ester. The S-geranylgeranyl cysteine moiety is linked to residue Cys59. A propeptide spans 60–62 (SVL) (removed in mature form).

Belongs to the G protein gamma family. G proteins are composed of 3 units, alpha, beta and gamma. Interacts with gpb-1 and gpb-2. Predominantly expressed in the central nervous system.

It localises to the cell membrane. Functionally, guanine nucleotide-binding proteins (G proteins) are involved as a modulator or transducer in various transmembrane signaling systems. The beta and gamma chains are required for the GTPase activity, for replacement of GDP by GTP, and for G protein-effector interaction. The sequence is that of Guanine nucleotide-binding protein subunit gamma (gpc-1) from Caenorhabditis elegans.